A 336-amino-acid chain; its full sequence is Dihydroorotate dehydrogenase (quinone) (336 aa).

FMN contacts are provided by residues Ala-62–Lys-66 and Thr-86. Lys-66 lines the substrate pocket. Residue Asn-111–Phe-115 participates in substrate binding. FMN is bound by residues Asn-139 and Asn-172. Asn-172 is a substrate binding site. Residue Ser-175 is the Nucleophile of the active site. Asn-177 contacts substrate. FMN contacts are provided by Lys-217 and Thr-245. Residue Asn-246–Thr-247 participates in substrate binding. FMN-binding positions include Gly-268, Gly-297, and Tyr-318–Ser-319.

Belongs to the dihydroorotate dehydrogenase family. Type 2 subfamily. As to quaternary structure, monomer. The cofactor is FMN.

The protein localises to the cell membrane. The catalysed reaction is (S)-dihydroorotate + a quinone = orotate + a quinol. It participates in pyrimidine metabolism; UMP biosynthesis via de novo pathway; orotate from (S)-dihydroorotate (quinone route): step 1/1. In terms of biological role, catalyzes the conversion of dihydroorotate to orotate with quinone as electron acceptor. This is Dihydroorotate dehydrogenase (quinone) from Vibrio vulnificus (strain YJ016).